A 94-amino-acid chain; its full sequence is Co-chaperonin GroES (94 aa).

Belongs to the GroES chaperonin family. Heptamer of 7 subunits arranged in a ring. Interacts with the chaperonin GroEL.

It localises to the cytoplasm. Functionally, together with the chaperonin GroEL, plays an essential role in assisting protein folding. The GroEL-GroES system forms a nano-cage that allows encapsulation of the non-native substrate proteins and provides a physical environment optimized to promote and accelerate protein folding. GroES binds to the apical surface of the GroEL ring, thereby capping the opening of the GroEL channel. The polypeptide is Co-chaperonin GroES (Limosilactobacillus reuteri (strain DSM 20016) (Lactobacillus reuteri)).